We begin with the raw amino-acid sequence, 100 residues long: Osteocalcin (100 aa).

Residues 1–23 form the signal peptide; that stretch reads MRALTLLALLALAALCITGQAGA. The propeptide occupies 24–51; it reads KPSGADSSKGAAFVSKQEGSEVVKRPRR. One can recognise a Gla domain in the interval 52-98; it reads YLYQWLGAPVPYPDPLEPKREVCELNPDCDELADHIGFQEAYRRFYG. Ca(2+) contacts are provided by Glu68, Glu72, Glu75, and Asp81. 4-carboxyglutamate occurs at positions 68, 72, and 75. A disulfide bridge connects residues Cys74 and Cys80.

It belongs to the osteocalcin/matrix Gla protein family. Post-translationally, gamma-carboxyglutamate residues are formed by vitamin K dependent carboxylation by GGCX. These residues are essential for the binding of calcium. Decarboxylation promotes the hormone activity.

It is found in the secreted. Its function is as follows. The carboxylated form is one of the main organic components of the bone matrix, which constitutes 1-2% of the total bone protein: it acts as a negative regulator of bone formation and is required to limit bone formation without impairing bone resorption or mineralization. The carboxylated form binds strongly to apatite and calcium. Functionally, the uncarboxylated form acts as a hormone secreted by osteoblasts, which regulates different cellular processes, such as energy metabolism, male fertility and brain development. Regulates of energy metabolism by acting as a hormone favoring pancreatic beta-cell proliferation, insulin secretion and sensitivity and energy expenditure. Uncarboxylated osteocalcin hormone also promotes testosterone production in the testes: acts as a ligand for G protein-coupled receptor GPRC6A at the surface of Leydig cells, initiating a signaling response that promotes the expression of enzymes required for testosterone synthesis in a CREB-dependent manner. Also acts as a regulator of brain development: osteocalcin hormone crosses the blood-brain barrier and acts as a ligand for GPR158 on neurons, initiating a signaling response that prevents neuronal apoptosis in the hippocampus, favors the synthesis of all monoamine neurotransmitters and inhibits that of gamma-aminobutyric acid (GABA). Osteocalcin also crosses the placenta during pregnancy and maternal osteocalcin is required for fetal brain development. This is Osteocalcin from Pongo pygmaeus (Bornean orangutan).